We begin with the raw amino-acid sequence, 231 residues long: uncharacterized protein (231 aa).

Basic and acidic residues predominate over residues 1–10 (MDGKKREVEN). The tract at residues 1–35 (MDGKKREVENGKNGNNIKDGNSSNTTNYGKDTKTT) is disordered. Over residues 11 to 24 (GKNGNNIKDGNSSN) the composition is skewed to low complexity. Over residues 25–35 (TTNYGKDTKTT) the composition is skewed to polar residues.

This is an uncharacterized protein from Aquifex aeolicus (strain VF5).